The sequence spans 279 residues: Dehydrogenase/reductase SDR family member 4 (279 aa).

37–61 contributes to the NADP(+) binding site; sequence LVTASTDGIGLAIARRLAQDGAHVV. The residue at position 93 (Lys93) is an N6-acetyllysine; alternate. Lys93 carries the N6-succinyllysine; alternate modification. Ser170 provides a ligand contact to substrate. The active-site Proton acceptor is Tyr183. Position 187 (Lys187) interacts with NADP(+). Lys217 carries the N6-acetyllysine; alternate modification. At Lys217 the chain carries N6-succinyllysine; alternate. Ser221 carries the phosphoserine modification. Lys228 and Lys235 each carry N6-succinyllysine. The Peroxisomal targeting signal motif lies at 277–279; the sequence is SRL.

Belongs to the short-chain dehydrogenases/reductases (SDR) family. As to quaternary structure, homotetramer. Detected in heart, kidney, liver and small intestine. Detected at lower levels in brain, lung, stomach and spleen.

It is found in the peroxisome. It catalyses the reaction a secondary alcohol + NADP(+) = a ketone + NADPH + H(+). The catalysed reaction is 3alpha-hydroxy-5beta-pregnan-20-one + NADP(+) = 5beta-pregnan-3,20-dione + NADPH + H(+). The enzyme catalyses 5beta-dihydrotestosterone + NADPH + H(+) = 5beta-androstane-3alpha,17beta-diol + NADP(+). It carries out the reaction all-trans-retinol + NADP(+) = all-trans-retinal + NADPH + H(+). It catalyses the reaction isatin + NADPH + H(+) = 3-hydroxyindolin-2-one + NADP(+). Inhibited by kaempferol, quercetin, genistein and myristic acid. In terms of biological role, NADPH-dependent oxidoreductase which catalyzes the reduction of a variety of compounds bearing carbonyl groups including ketosteroids, alpha-dicarbonyl compounds, aldehydes, aromatic ketones and quinones. Reduces all-trans-retinal and 9-cis retinal. Reduces 3-ketosteroids and benzil into 3alpha-hydroxysteroids and S-benzoin, respectively, in contrast to the stereoselectivity of primates DHRS4s which produce 3beta-hydroxysteroids and R-benzoin. In the reverse reaction, catalyzes the NADP-dependent oxidation of 3alpha-hydroxysteroids and alcohol, but with much lower efficiency. Involved in the metabolism of 3alpha-hydroxysteroids, retinoid, isatin and xenobiotic carbonyl compounds. In Sus scrofa (Pig), this protein is Dehydrogenase/reductase SDR family member 4 (DHRS4).